Here is a 1368-residue protein sequence, read N- to C-terminus: DNA-directed RNA polymerase subunit beta (1368 aa).

Belongs to the RNA polymerase beta chain family. As to quaternary structure, the RNAP catalytic core consists of 2 alpha, 1 beta, 1 beta' and 1 omega subunit. When a sigma factor is associated with the core the holoenzyme is formed, which can initiate transcription.

It carries out the reaction RNA(n) + a ribonucleoside 5'-triphosphate = RNA(n+1) + diphosphate. Functionally, DNA-dependent RNA polymerase catalyzes the transcription of DNA into RNA using the four ribonucleoside triphosphates as substrates. This is DNA-directed RNA polymerase subunit beta from Herminiimonas arsenicoxydans.